An 86-amino-acid polypeptide reads, in one-letter code: Small ribosomal subunit protein uS17 (86 aa).

It belongs to the universal ribosomal protein uS17 family. In terms of assembly, part of the 30S ribosomal subunit.

One of the primary rRNA binding proteins, it binds specifically to the 5'-end of 16S ribosomal RNA. The protein is Small ribosomal subunit protein uS17 of Lactococcus lactis subsp. cremoris (strain SK11).